Reading from the N-terminus, the 625-residue chain is Chaperone protein HtpG (625 aa).

Residues 1 to 341 are a; substrate-binding; that stretch reads MEKKQFQAES…SEDLSLNISR (341 aa). A b region spans residues 342-551; sequence EMLQHDRQLK…DGEITLEMEK (210 aa). The tract at residues 552–625 is c; that stretch reads VLQAMPDNQN…FSQNMCKVMV (74 aa).

This sequence belongs to the heat shock protein 90 family. As to quaternary structure, homodimer.

It is found in the cytoplasm. Its function is as follows. Molecular chaperone. Has ATPase activity. This Shouchella clausii (strain KSM-K16) (Alkalihalobacillus clausii) protein is Chaperone protein HtpG.